Consider the following 255-residue polypeptide: tRNA (guanine-N(1)-)-methyltransferase (255 aa).

S-adenosyl-L-methionine-binding positions include Gly117 and 137 to 142 (IGDYVL).

Belongs to the RNA methyltransferase TrmD family. Homodimer.

The protein resides in the cytoplasm. It catalyses the reaction guanosine(37) in tRNA + S-adenosyl-L-methionine = N(1)-methylguanosine(37) in tRNA + S-adenosyl-L-homocysteine + H(+). Its function is as follows. Specifically methylates guanosine-37 in various tRNAs. This chain is tRNA (guanine-N(1)-)-methyltransferase, found in Chromobacterium violaceum (strain ATCC 12472 / DSM 30191 / JCM 1249 / CCUG 213 / NBRC 12614 / NCIMB 9131 / NCTC 9757 / MK).